A 772-amino-acid chain; its full sequence is Metabotropic glutamate receptor-like protein G (772 aa).

Residues 1-23 form the signal peptide; sequence MKKIIFLVLFLIFIFKDIKSSYG. Over 24–391 the chain is Extracellular; the sequence is VDLVNFKMIT…TQVKFSPSIQ (368 aa). N-linked (GlcNAc...) asparagine glycans are attached at residues N73, N126, N262, N313, N343, and N378. A helical transmembrane segment spans residues 392–412; the sequence is IGVSIVSGVLIAIVLLSMVGV. Over 413–426 the chain is Cytoplasmic; the sequence is YKYRASSSIRSASP. The chain crosses the membrane as a helical span at residues 427 to 447; sequence IFLIFILFGALIVFGGIILWV. The Extracellular portion of the chain corresponds to 448-463; sequence SELNDHVCNGRLWMVT. Residues 464–484 traverse the membrane as a helical segment; it reads LGFSTLIGSLVVKNFRIWLIF. The Cytoplasmic segment spans residues 485 to 500; that stretch reads DNPELKTVKITNYQLY. The chain crosses the membrane as a helical span at residues 501 to 521; that stretch reads PWVACCLVINIILMSILTSLG. The Extracellular segment spans residues 522–551; it reads DLREVDATGIDSLGKYEFLKICKMNNSGAS. N546 carries N-linked (GlcNAc...) asparagine glycosylation. A helical membrane pass occupies residues 552–572; sequence VLYTILAYFGALLLTGVFVSW. Topologically, residues 573–586 are cytoplasmic; that stretch reads KIRIVDIEEFNESR. Residues 587–607 traverse the membrane as a helical segment; that stretch reads AIAHTLYAISFCLFVIVPLMI. Residues 608 to 616 lie on the Extracellular side of the membrane; that stretch reads SPLEKQSET. A helical membrane pass occupies residues 617-637; that stretch reads IILSVAGLFITTAAVLIIFLP. Topologically, residues 638-772 are cytoplasmic; it reads KFYRVYEYGE…QIEPDEKNQD (135 aa). A disordered region spans residues 664-772; that stretch reads TARAESHKSS…QIEPDEKNQD (109 aa). Residues 718–728 are compositionally biased toward acidic residues; sequence FTEESVSEIDE. The segment covering 740–753 has biased composition (low complexity); the sequence is PEINQSEQQNSEIE. The segment covering 754-763 has biased composition (pro residues); the sequence is QPPPPPPPQQ.

In the N-terminal section; belongs to the BMP lipoprotein family. It in the C-terminal section; belongs to the G-protein coupled receptor 3 family. GABA-B receptor subfamily.

It is found in the membrane. The polypeptide is Metabotropic glutamate receptor-like protein G (grlG) (Dictyostelium discoideum (Social amoeba)).